A 190-amino-acid chain; its full sequence is NADH-quinone oxidoreductase subunit C (190 aa).

The protein belongs to the complex I 30 kDa subunit family. In terms of assembly, NDH-1 is composed of 14 different subunits. Subunits NuoB, C, D, E, F, and G constitute the peripheral sector of the complex.

Its subcellular location is the cell membrane. The enzyme catalyses a quinone + NADH + 5 H(+)(in) = a quinol + NAD(+) + 4 H(+)(out). NDH-1 shuttles electrons from NADH, via FMN and iron-sulfur (Fe-S) centers, to quinones in the respiratory chain. The immediate electron acceptor for the enzyme in this species is believed to be ubiquinone. Couples the redox reaction to proton translocation (for every two electrons transferred, four hydrogen ions are translocated across the cytoplasmic membrane), and thus conserves the redox energy in a proton gradient. The sequence is that of NADH-quinone oxidoreductase subunit C from Wolbachia sp. subsp. Brugia malayi (strain TRS).